Reading from the N-terminus, the 695-residue chain is ATP-dependent DNA helicase II subunit 2 (695 aa).

The 233-residue stretch at 229-461 folds into the Ku domain; that stretch reads FSIGNRDSKD…IDFAVSNYID (233 aa).

The protein belongs to the ku80 family. As to quaternary structure, heterodimer of pku70 and pku80.

Its subcellular location is the nucleus. The protein localises to the chromosome. It is found in the telomere. The enzyme catalyses ATP + H2O = ADP + phosphate + H(+). In terms of biological role, single-stranded DNA-dependent ATP-dependent helicase. Involved in non-homologous end joining (NHEJ) DNA double strand break repair. DNA-binding is sequence-independent but has a high affinity to nicks in double-stranded DNA and to the ends of duplex DNA. Binds to naturally occurring chromosomal ends, and therefore provides chromosomal end protection. Required also for telomere recombination to repair telomeric ends in the absence of telomerase. ku70, of the ku70/ku80 heterodimer, binds to the stem loop of tlc1, the RNA component of telomerase. Involved in telomere maintenance. Interacts with telomeric repeats and subtelomeric sequences thereby controlling telomere length and protecting against subtelomeric rearrangement. Required for mating-type switching. This is ATP-dependent DNA helicase II subunit 2 (pku80) from Schizosaccharomyces pombe (strain 972 / ATCC 24843) (Fission yeast).